The sequence spans 123 residues: Putative iron-sulfur cluster insertion protein ErpA (123 aa).

Iron-sulfur cluster contacts are provided by Cys51, Cys115, and Cys117.

This sequence belongs to the HesB/IscA family. In terms of assembly, homodimer. Iron-sulfur cluster is required as a cofactor.

Required for insertion of 4Fe-4S clusters. This Burkholderia multivorans (strain ATCC 17616 / 249) protein is Putative iron-sulfur cluster insertion protein ErpA.